Reading from the N-terminus, the 1173-residue chain is 3-hydroxy-3-methylglutaryl coenzyme A reductase mlcD (1173 aa).

N-linked (GlcNAc...) asparagine glycans are attached at residues Asn143 and Asn186. One can recognise an SSD domain in the interval 241–420 (DVVVMVLGYI…FTFYTAILSI (180 aa)). A run of 7 helical transmembrane segments spans residues 242–262 (VVVMVLGYISMHLTFVSLFLS), 272–292 (LATSVLLSSTFAFLLGLDVAI), 302–322 (LLSEGLPFLVVIVGFEKSITL), 368–388 (NIVCHYVVEILLLVIGAVLGI), 397–417 (VLAALILFFDCLLLFTFYTAI), 479–499 (FWMVVGFLIVNLVNIGSTLFQ), and 594–614 (VLSKWVFVALALSVALNSYLF). The linker stretch occupies residues 498–673 (FQASSSGSLS…FTPTTTDSDS (176 aa)). Residues 647–666 (NQTPQIQSSLQAPQTRVFTP) show a composition bias toward polar residues. The disordered stretch occupies residues 647 to 669 (NQTPQIQSSLQAPQTRVFTPTTT). The segment at 674 to 1133 (DASLVLIKAS…LVKAHMAHNR (460 aa)) is catalytic. Glu822 (charge relay system) is an active-site residue. Asn886 is a glycosylation site (N-linked (GlcNAc...) asparagine). Lys956 serves as the catalytic Charge relay system. Residue Asn997 is glycosylated (N-linked (GlcNAc...) asparagine). Asp1032 serves as the catalytic Charge relay system. Residue His1128 is the Proton donor of the active site. N-linked (GlcNAc...) asparagine glycosylation occurs at Asn1132. The tract at residues 1132 to 1173 (NRSAPASSAPSRSVSPSGGTRTVPVPNNALRPSAAATDRARR) is disordered. Residues 1133–1148 (RSAPASSAPSRSVSPS) are compositionally biased toward low complexity.

Belongs to the HMG-CoA reductase family.

The protein localises to the endoplasmic reticulum membrane. It carries out the reaction (R)-mevalonate + 2 NADP(+) + CoA = (3S)-3-hydroxy-3-methylglutaryl-CoA + 2 NADPH + 2 H(+). It participates in polyketide biosynthesis. In terms of biological role, HMG-CoA reductase; part of the gene cluster that mediates the biosynthesis of compactin, also known as mevastatin or ML-236B, and which acts as a potent competitive inhibitor of HMG-CoA reductase. Compactin biosynthesis is performed in two stages. The first stage is catalyzed by the nonaketide synthase mlcA, which belongs to type I polyketide synthases and catalyzes the iterative nine-step formation of the polyketide. This PKS stage is completed by the action of dehydrogenase mlcG, which catalyzes the NADPH-dependent reduction of the unsaturated tetra-, penta- and heptaketide intermediates that arise during the mlcA-mediated biosynthesis of the nonaketide chain and leads to dihydro-ML-236C carboxylate. Covalently bound dihydro-ML-236C carboxylate is released from mlcA by the mlcF esterase. Conversion of dihydro-ML-236C carboxylate into ML-236A carboxylate is subsequently performed with the participation of molecular oxygen and P450 monoogygenase mlcC. Finally, mlcH performs the conversion of ML-236A carboxylate to ML-236B/compactin carboxylate through the addition of the side-chain diketide moiety produced by the diketide synthase mlcB. HMG-CoA reductase mlcD may act as a down-regulator of compactin production and is involved in conferring resistance to ML-236B/compactin. In Penicillium citrinum, this protein is 3-hydroxy-3-methylglutaryl coenzyme A reductase mlcD.